The sequence spans 234 residues: Adenosine 5'-phosphosulfate reductase (234 aa).

[4Fe-4S] cluster is bound by residues Cys-120, Cys-121, Cys-203, and Cys-206. The Nucleophile; cysteine thiosulfonate intermediate role is filled by Cys-229.

The protein belongs to the PAPS reductase family. CysH subfamily. It depends on [4Fe-4S] cluster as a cofactor.

The protein localises to the cytoplasm. The enzyme catalyses [thioredoxin]-disulfide + sulfite + AMP + 2 H(+) = adenosine 5'-phosphosulfate + [thioredoxin]-dithiol. Its pathway is sulfur metabolism; hydrogen sulfide biosynthesis; sulfite from sulfate. Catalyzes the formation of sulfite from adenosine 5'-phosphosulfate (APS) using thioredoxin as an electron donor. The chain is Adenosine 5'-phosphosulfate reductase from Bacillus thuringiensis (strain Al Hakam).